The following is a 504-amino-acid chain: Maturase K (504 aa).

It belongs to the intron maturase 2 family. MatK subfamily.

It localises to the plastid. Its subcellular location is the chloroplast. Its function is as follows. Usually encoded in the trnK tRNA gene intron. Probably assists in splicing its own and other chloroplast group II introns. In Amaranthus caudatus (Love-lies-bleeding), this protein is Maturase K.